We begin with the raw amino-acid sequence, 175 residues long: Nicotinamide-nucleotide adenylyltransferase 1 (175 aa).

Belongs to the archaeal NMN adenylyltransferase family.

Its subcellular location is the cytoplasm. It catalyses the reaction beta-nicotinamide D-ribonucleotide + ATP + H(+) = diphosphate + NAD(+). Its pathway is cofactor biosynthesis; NAD(+) biosynthesis; NAD(+) from nicotinamide D-ribonucleotide: step 1/1. The polypeptide is Nicotinamide-nucleotide adenylyltransferase 1 (Sulfolobus acidocaldarius (strain ATCC 33909 / DSM 639 / JCM 8929 / NBRC 15157 / NCIMB 11770)).